A 492-amino-acid chain; its full sequence is 2,3-bisphosphoglycerate-independent phosphoglycerate mutase (492 aa).

Positions 11 and 61 each coordinate Mn(2+). The active-site Phosphoserine intermediate is the Ser-61. Residues His-118, Arg-147–Asp-148, Arg-178, Arg-184, Arg-248–Arg-251, and Lys-320 contribute to the substrate site. Mn(2+) is bound by residues Asp-386, His-390, Asp-427, His-428, and His-445.

This sequence belongs to the BPG-independent phosphoglycerate mutase family. Monomer. Mn(2+) serves as cofactor.

The enzyme catalyses (2R)-2-phosphoglycerate = (2R)-3-phosphoglycerate. It functions in the pathway carbohydrate degradation; glycolysis; pyruvate from D-glyceraldehyde 3-phosphate: step 3/5. Catalyzes the interconversion of 2-phosphoglycerate and 3-phosphoglycerate. The sequence is that of 2,3-bisphosphoglycerate-independent phosphoglycerate mutase from Campylobacter jejuni (strain RM1221).